Here is a 278-residue protein sequence, read N- to C-terminus: Large ribosomal subunit protein uL2 (278 aa).

Disordered regions lie at residues 29 to 53 (PVKS…TSRG) and 221 to 278 (RGVA…KKKR). Over residues 269-278 (IRSRHAKKKR) the composition is skewed to basic residues.

It belongs to the universal ribosomal protein uL2 family. In terms of assembly, part of the 50S ribosomal subunit. Forms a bridge to the 30S subunit in the 70S ribosome.

Its function is as follows. One of the primary rRNA binding proteins. Required for association of the 30S and 50S subunits to form the 70S ribosome, for tRNA binding and peptide bond formation. It has been suggested to have peptidyltransferase activity; this is somewhat controversial. Makes several contacts with the 16S rRNA in the 70S ribosome. The sequence is that of Large ribosomal subunit protein uL2 from Erythrobacter litoralis (strain HTCC2594).